A 297-amino-acid chain; its full sequence is ATP phosphoribosyltransferase (297 aa).

Position 1 is an N-acetylmethionine (methionine 1).

Belongs to the ATP phosphoribosyltransferase family.

Its subcellular location is the cytoplasm. The catalysed reaction is 1-(5-phospho-beta-D-ribosyl)-ATP + diphosphate = 5-phospho-alpha-D-ribose 1-diphosphate + ATP. It functions in the pathway amino-acid biosynthesis; L-histidine biosynthesis; L-histidine from 5-phospho-alpha-D-ribose 1-diphosphate: step 1/9. Its function is as follows. Catalyzes the condensation of ATP and 5-phosphoribose 1-diphosphate to form N'-(5'-phosphoribosyl)-ATP (PR-ATP). Has a crucial role in the pathway because the rate of histidine biosynthesis seems to be controlled primarily by regulation of the enzymatic activity. This Saccharomyces cerevisiae (strain ATCC 204508 / S288c) (Baker's yeast) protein is ATP phosphoribosyltransferase (HIS1).